Consider the following 352-residue polypeptide: Peptide chain release factor 1 (352 aa).

An N5-methylglutamine modification is found at Gln-233. A disordered region spans residues Asn-288–Asn-309. Residues Ala-289–Arg-306 are compositionally biased toward basic and acidic residues.

Belongs to the prokaryotic/mitochondrial release factor family. Methylated by PrmC. Methylation increases the termination efficiency of RF1.

It localises to the cytoplasm. Its function is as follows. Peptide chain release factor 1 directs the termination of translation in response to the peptide chain termination codons UAG and UAA. The protein is Peptide chain release factor 1 of Helicobacter acinonychis (strain Sheeba).